The following is a 337-amino-acid chain: Fructose-1,6-bisphosphatase class 1 (337 aa).

Mg(2+)-binding residues include Glu94, Asp116, Leu118, and Asp119. Substrate-binding positions include 119–122, Asn210, and Lys276; that span reads DGSS. Position 282 (Glu282) interacts with Mg(2+).

The protein belongs to the FBPase class 1 family. As to quaternary structure, homotetramer. Mg(2+) serves as cofactor.

It is found in the cytoplasm. The enzyme catalyses beta-D-fructose 1,6-bisphosphate + H2O = beta-D-fructose 6-phosphate + phosphate. It participates in carbohydrate biosynthesis; gluconeogenesis. The polypeptide is Fructose-1,6-bisphosphatase class 1 (Burkholderia lata (strain ATCC 17760 / DSM 23089 / LMG 22485 / NCIMB 9086 / R18194 / 383)).